We begin with the raw amino-acid sequence, 299 residues long: Phosphatidylserine decarboxylase proenzyme (299 aa).

Residues Asp-115, His-171, and Ser-258 each act as charge relay system; for autoendoproteolytic cleavage activity in the active site. The active-site Schiff-base intermediate with substrate; via pyruvic acid; for decarboxylase activity is Ser-258. Pyruvic acid (Ser); by autocatalysis is present on Ser-258.

This sequence belongs to the phosphatidylserine decarboxylase family. PSD-B subfamily. Prokaryotic type II sub-subfamily. As to quaternary structure, heterodimer of a large membrane-associated beta subunit and a small pyruvoyl-containing alpha subunit. Requires pyruvate as cofactor. Is synthesized initially as an inactive proenzyme. Formation of the active enzyme involves a self-maturation process in which the active site pyruvoyl group is generated from an internal serine residue via an autocatalytic post-translational modification. Two non-identical subunits are generated from the proenzyme in this reaction, and the pyruvate is formed at the N-terminus of the alpha chain, which is derived from the carboxyl end of the proenzyme. The autoendoproteolytic cleavage occurs by a canonical serine protease mechanism, in which the side chain hydroxyl group of the serine supplies its oxygen atom to form the C-terminus of the beta chain, while the remainder of the serine residue undergoes an oxidative deamination to produce ammonia and the pyruvoyl prosthetic group on the alpha chain. During this reaction, the Ser that is part of the protease active site of the proenzyme becomes the pyruvoyl prosthetic group, which constitutes an essential element of the active site of the mature decarboxylase.

It localises to the cell membrane. The catalysed reaction is a 1,2-diacyl-sn-glycero-3-phospho-L-serine + H(+) = a 1,2-diacyl-sn-glycero-3-phosphoethanolamine + CO2. Its pathway is phospholipid metabolism; phosphatidylethanolamine biosynthesis; phosphatidylethanolamine from CDP-diacylglycerol: step 2/2. Its function is as follows. Catalyzes the formation of phosphatidylethanolamine (PtdEtn) from phosphatidylserine (PtdSer). In Chlamydia felis (strain Fe/C-56) (Chlamydophila felis), this protein is Phosphatidylserine decarboxylase proenzyme.